We begin with the raw amino-acid sequence, 186 residues long: ATP synthase subunit delta (186 aa).

The protein belongs to the ATPase delta chain family. F-type ATPases have 2 components, F(1) - the catalytic core - and F(0) - the membrane proton channel. F(1) has five subunits: alpha(3), beta(3), gamma(1), delta(1), epsilon(1). F(0) has three main subunits: a(1), b(2) and c(10-14). The alpha and beta chains form an alternating ring which encloses part of the gamma chain. F(1) is attached to F(0) by a central stalk formed by the gamma and epsilon chains, while a peripheral stalk is formed by the delta and b chains.

It is found in the cell inner membrane. Functionally, f(1)F(0) ATP synthase produces ATP from ADP in the presence of a proton or sodium gradient. F-type ATPases consist of two structural domains, F(1) containing the extramembraneous catalytic core and F(0) containing the membrane proton channel, linked together by a central stalk and a peripheral stalk. During catalysis, ATP synthesis in the catalytic domain of F(1) is coupled via a rotary mechanism of the central stalk subunits to proton translocation. Its function is as follows. This protein is part of the stalk that links CF(0) to CF(1). It either transmits conformational changes from CF(0) to CF(1) or is implicated in proton conduction. The sequence is that of ATP synthase subunit delta from Mesorhizobium japonicum (strain LMG 29417 / CECT 9101 / MAFF 303099) (Mesorhizobium loti (strain MAFF 303099)).